Consider the following 89-residue polypeptide: Small ribosomal subunit protein uS15 (89 aa).

The protein belongs to the universal ribosomal protein uS15 family. Part of the 30S ribosomal subunit. Forms a bridge to the 50S subunit in the 70S ribosome, contacting the 23S rRNA.

One of the primary rRNA binding proteins, it binds directly to 16S rRNA where it helps nucleate assembly of the platform of the 30S subunit by binding and bridging several RNA helices of the 16S rRNA. In terms of biological role, forms an intersubunit bridge (bridge B4) with the 23S rRNA of the 50S subunit in the ribosome. This Bordetella parapertussis (strain 12822 / ATCC BAA-587 / NCTC 13253) protein is Small ribosomal subunit protein uS15.